We begin with the raw amino-acid sequence, 189 residues long: Ion-translocating oxidoreductase complex subunit B (189 aa).

The segment at M1 to A26 is hydrophobic. A 4Fe-4S domain is found at E32–V90. The [4Fe-4S] cluster site is built by C49, C52, C57, C73, C114, C117, C120, C124, C144, C147, C150, and C154. 4Fe-4S ferredoxin-type domains lie at K105–K134 and L135–V164.

Belongs to the 4Fe4S bacterial-type ferredoxin family. RnfB subfamily. In terms of assembly, the complex is composed of six subunits: RnfA, RnfB, RnfC, RnfD, RnfE and RnfG. Requires [4Fe-4S] cluster as cofactor.

It is found in the cell inner membrane. Its function is as follows. Part of a membrane-bound complex that couples electron transfer with translocation of ions across the membrane. This is Ion-translocating oxidoreductase complex subunit B from Shewanella pealeana (strain ATCC 700345 / ANG-SQ1).